We begin with the raw amino-acid sequence, 397 residues long: 1-deoxy-D-xylulose 5-phosphate reductoisomerase (397 aa).

Threonine 17, glycine 18, serine 19, isoleucine 20, asparagine 47, and asparagine 130 together coordinate NADPH. 1-deoxy-D-xylulose 5-phosphate is bound at residue lysine 131. Glutamate 132 is a binding site for NADPH. Aspartate 156 is a Mn(2+) binding site. 4 residues coordinate 1-deoxy-D-xylulose 5-phosphate: serine 157, glutamate 158, serine 182, and histidine 205. Glutamate 158 is a Mn(2+) binding site. Residue glycine 211 coordinates NADPH. Positions 218, 223, 224, and 227 each coordinate 1-deoxy-D-xylulose 5-phosphate. Residue glutamate 227 participates in Mn(2+) binding.

This sequence belongs to the DXR family. Mg(2+) serves as cofactor. The cofactor is Mn(2+).

It catalyses the reaction 2-C-methyl-D-erythritol 4-phosphate + NADP(+) = 1-deoxy-D-xylulose 5-phosphate + NADPH + H(+). Its pathway is isoprenoid biosynthesis; isopentenyl diphosphate biosynthesis via DXP pathway; isopentenyl diphosphate from 1-deoxy-D-xylulose 5-phosphate: step 1/6. In terms of biological role, catalyzes the NADPH-dependent rearrangement and reduction of 1-deoxy-D-xylulose-5-phosphate (DXP) to 2-C-methyl-D-erythritol 4-phosphate (MEP). The protein is 1-deoxy-D-xylulose 5-phosphate reductoisomerase of Allorhizobium ampelinum (strain ATCC BAA-846 / DSM 112012 / S4) (Agrobacterium vitis (strain S4)).